The following is a 114-amino-acid chain: Fumarate reductase subunit D (114 aa).

3 helical membrane passes run 24 to 44 (VSAI…PFGL), 50 to 70 (LITF…TIFP), and 92 to 112 (GGFI…FAVI).

It belongs to the FrdD family. In terms of assembly, part of an enzyme complex containing four subunits: a flavoprotein (FrdA), an iron-sulfur protein (FrdB), and two hydrophobic anchor proteins (FrdC and FrdD).

It localises to the cell inner membrane. Anchors the catalytic components of the fumarate reductase complex to the cell membrane, binds quinones. In Haemophilus influenzae (strain 86-028NP), this protein is Fumarate reductase subunit D.